Consider the following 84-residue polypeptide: Delta-thalatoxin-Hhe1a (84 aa).

A signal peptide spans Met-1–Ala-19. Residues Met-20–Ala-33 constitute a propeptide that is removed on maturation. Disulfide bonds link Cys-38–Cys-78, Cys-40–Cys-68, and Cys-61–Cys-79.

This sequence belongs to the sea anemone sodium channel inhibitory toxin family. Type II subfamily.

The protein localises to the secreted. The protein resides in the nematocyst. In terms of biological role, binds specifically to the voltage-gated sodium channel (Nav) and delays its inactivation. The polypeptide is Delta-thalatoxin-Hhe1a (Heterodactyla hemprichii (Hemprich's sea anemone)).